The sequence spans 447 residues: Glutamyl-tRNA reductase (447 aa).

Substrate-binding positions include 49–52 (TCNR), Ser109, 114–116 (EQQ), and Gln120. The active-site Nucleophile is Cys50. 189 to 194 (GAGSMG) is an NADP(+) binding site.

Belongs to the glutamyl-tRNA reductase family. Homodimer.

It carries out the reaction (S)-4-amino-5-oxopentanoate + tRNA(Glu) + NADP(+) = L-glutamyl-tRNA(Glu) + NADPH + H(+). Its pathway is porphyrin-containing compound metabolism; protoporphyrin-IX biosynthesis; 5-aminolevulinate from L-glutamyl-tRNA(Glu): step 1/2. Its function is as follows. Catalyzes the NADPH-dependent reduction of glutamyl-tRNA(Glu) to glutamate 1-semialdehyde (GSA). In Mycobacterium sp. (strain JLS), this protein is Glutamyl-tRNA reductase.